Here is a 63-residue protein sequence, read N- to C-terminus: Sperm protamine P1 (63 aa).

Residues 1-63 (MARYRRHSRS…RYSRRGRRRY (63 aa)) form a disordered region.

This sequence belongs to the protamine P1 family. As to expression, testis.

The protein localises to the nucleus. Its subcellular location is the chromosome. Functionally, protamines substitute for histones in the chromatin of sperm during the haploid phase of spermatogenesis. They compact sperm DNA into a highly condensed, stable and inactive complex. The chain is Sperm protamine P1 (PRM1) from Pseudantechinus macdonnellensis (Fat-tailed marsupial mouse).